We begin with the raw amino-acid sequence, 342 residues long: MADLRSTFLNVYSVLKSELLHDPAFEFSPDSRQWLDRMLDYNVPGGKLNRGLSVIDSYRLLKDGHELNDDEIFLASALGWCIEWLQAYFLVLDDIMDNSHTRRGQPCWFRVPKVGMIAANDGVLLRNHIPRILKKHFRGKPYYADLLDLFNEVEFQTASGQMIDLITTLEGEKDLSKYTLSLHRRIVQYKTAYYSFYLPVACALLMVGENLDNHIDVKNILVDMGTYFQVQDDYLDCFGAPETIGKIGTDIEDFKCSWLVVKALELSNDEQKKVLYDNYGKPDPANVAKVKALYDELNLQGVFTEYESKSYEKLVTSIEAHPSKAVQALLKSFLGKIYKRQK.

Isopentenyl diphosphate is bound by residues Lys-47, Arg-50, and Gln-86. Positions 93 and 97 each coordinate Mg(2+). Residue Arg-102 participates in dimethylallyl diphosphate binding. Arg-103 serves as a coordination point for isopentenyl diphosphate. Dimethylallyl diphosphate is bound by residues Lys-190, Thr-191, Gln-229, Lys-246, and Lys-255.

The protein belongs to the FPP/GGPP synthase family. Mg(2+) serves as cofactor.

It is found in the cytoplasm. It carries out the reaction isopentenyl diphosphate + dimethylallyl diphosphate = (2E)-geranyl diphosphate + diphosphate. The enzyme catalyses isopentenyl diphosphate + (2E)-geranyl diphosphate = (2E,6E)-farnesyl diphosphate + diphosphate. Its pathway is isoprenoid biosynthesis; farnesyl diphosphate biosynthesis; farnesyl diphosphate from geranyl diphosphate and isopentenyl diphosphate: step 1/1. It participates in isoprenoid biosynthesis; geranyl diphosphate biosynthesis; geranyl diphosphate from dimethylallyl diphosphate and isopentenyl diphosphate: step 1/1. Catalyzes the sequential condensation of isopentenyl pyrophosphate with the allylic pyrophosphates, dimethylallyl pyrophosphate, and then with the resultant geranylpyrophosphate to the ultimate product farnesyl pyrophosphate. This Lupinus albus (White lupine) protein is Farnesyl pyrophosphate synthase 1 (FPS1).